A 476-amino-acid chain; its full sequence is MGRKEEDDCSSWKKQTTNIRKTFIFMEVLGSGAFSEVFLVKQRLTGKLFALKCIKKSPAFRDSSLENEIAVLKKIKHENIVTLEDIYESTTHYYLVMQLVSGGELFDRILERGVYTEKDASLVIQQVLSAVKYLHENGIVHRDLKPENLLYLTPEENSKIMITDFGLSKMEQNGIMSTACGTPGYVAPEVLAQKPYSKAVDCWSIGVITYILLCGYPPFYEETESKLFEKIKEGYYEFESPFWDDISESAKDFICHLLEKDPNERYTCEKALSHPWIDGNTALHRDIYPSVSLQIQKNFAKSKWRQAFNAAAVVHHMRKLHMNLHSPGVRPEVENRPPETQASETSRPSSPEITITEAPVLDHSVALPALTQLPCQHGRRPTAPGGRSLNCLVNGSLHISSSLVPMHQGSLAAGPCGCCSSCLNIGSKGKSSYCSEPTLLKKANKKQNFKSEVMVPVKASGSSHCRAGQTGVCLIM.

One can recognise a Protein kinase domain in the interval 23–277 (FIFMEVLGSG…CEKALSHPWI (255 aa)). ATP contacts are provided by residues 29 to 37 (LGSGAFSEV) and K52. Residue D143 is the Proton acceptor of the active site. Residues 277–317 (IDGNTALHRDIYPSVSLQIQKNFAKSKWRQAFNAAAVVHHM) are autoinhibitory domain. The interval 297–318 (KNFAKSKWRQAFNAAAVVHHMR) is calmodulin-binding. The segment at 325-352 (HSPGVRPEVENRPPETQASETSRPSSPE) is disordered. A compositionally biased stretch (polar residues) spans 338 to 352 (PETQASETSRPSSPE).

It belongs to the protein kinase superfamily. CAMK Ser/Thr protein kinase family. CaMK subfamily. May be prenylated on Cys-473. Mainly expressed in brain with small amounts in skeletal muscles, kidney, spleen and liver. Strongly expressed in forebrain neocortex, striatum and limbic system.

The protein resides in the cytoplasm. Its subcellular location is the golgi apparatus membrane. It localises to the cell membrane. The enzyme catalyses L-seryl-[protein] + ATP = O-phospho-L-seryl-[protein] + ADP + H(+). It catalyses the reaction L-threonyl-[protein] + ATP = O-phospho-L-threonyl-[protein] + ADP + H(+). With respect to regulation, activated by Ca(2+)/calmodulin. Binding of calmodulin is thought to result in a conformational change and leads to activation through phosphorylation by CAMKK1. Functionally, calcium/calmodulin-dependent protein kinase belonging to a proposed calcium-triggered signaling cascade. In vitro phosphorylates transcription factor CREB1. The polypeptide is Calcium/calmodulin-dependent protein kinase type 1G (CAMK1G) (Homo sapiens (Human)).